We begin with the raw amino-acid sequence, 303 residues long: MNTFVLQLDEETIQHLIQTLKEYQVQNANPYIRFAAKFKQATILIYASRKVVFQGKNASAVAQELGYKPVVHKSNQDNIKNKQDCSLIGSDEVGNGSYFGGLAVVASFVKQADHAFLKELGVDDSKNLTDVKIKQIAPLLEAKLPHKALLLSPQKYNEVVGDNKLHNAVSVKVALHNQAIFLLLQEGWQPDKIVIDAFTSPKNYQKYLKNENNRFSNPLTLEERAEGKYLAVAVSSIIARKLFLDNLDELSQKVGFNLPSGAGQQSDKIASQILKTYGELGLETTAKLHFKNTKKAYQLLKKE.

In terms of domain architecture, RNase H type-2 spans 85–302 (CSLIGSDEVG…TKKAYQLLKK (218 aa)). A divalent metal cation is bound by residues Asp91, Glu92, and Asp196.

Belongs to the RNase HII family. RnhC subfamily. Mn(2+) serves as cofactor. The cofactor is Mg(2+).

The protein resides in the cytoplasm. The catalysed reaction is Endonucleolytic cleavage to 5'-phosphomonoester.. In terms of biological role, endonuclease that specifically degrades the RNA of RNA-DNA hybrids. The sequence is that of Ribonuclease HIII from Streptococcus mutans serotype c (strain ATCC 700610 / UA159).